Consider the following 326-residue polypeptide: Alkanal monooxygenase beta chain (326 aa).

It belongs to the bacterial luciferase oxidoreductase family. Heterodimer of an alpha and a beta chain.

It carries out the reaction a long-chain fatty aldehyde + FMNH2 + O2 = a long-chain fatty acid + hnu + FMN + H2O + 2 H(+). Light-emitting reaction in luminous bacteria. The specific role of the beta subunit is unknown, but it is absolutely required for bioluminescence activity. In Photobacterium leiognathi, this protein is Alkanal monooxygenase beta chain (luxB).